We begin with the raw amino-acid sequence, 302 residues long: Zinc import ATP-binding protein ZnuC (302 aa).

Residues Val-13–Arg-228 enclose the ABC transporter domain. Gly-45–Ser-52 is an ATP binding site.

It belongs to the ABC transporter superfamily. Zinc importer (TC 3.A.1.15.5) family. In terms of assembly, the complex is composed of two ATP-binding proteins (ZnuC), two transmembrane proteins (ZnuB) and a solute-binding protein (ZnuA).

It is found in the cell inner membrane. The enzyme catalyses Zn(2+)(out) + ATP(in) + H2O(in) = Zn(2+)(in) + ADP(in) + phosphate(in) + H(+)(in). Functionally, part of the ABC transporter complex ZnuABC involved in zinc import. Responsible for energy coupling to the transport system. The chain is Zinc import ATP-binding protein ZnuC from Rhizobium meliloti (strain 1021) (Ensifer meliloti).